The chain runs to 343 residues: Protein RecA (343 aa).

Residue 66-73 (GPESSGKT) participates in ATP binding.

The protein belongs to the RecA family.

The protein resides in the cytoplasm. In terms of biological role, can catalyze the hydrolysis of ATP in the presence of single-stranded DNA, the ATP-dependent uptake of single-stranded DNA by duplex DNA, and the ATP-dependent hybridization of homologous single-stranded DNAs. It interacts with LexA causing its activation and leading to its autocatalytic cleavage. This is Protein RecA from Rickettsia bellii (strain RML369-C).